Here is a 137-residue protein sequence, read N- to C-terminus: Small heat shock protein IbpA (137 aa).

In terms of domain architecture, sHSP spans serine 28–lysine 137.

The protein belongs to the small heat shock protein (HSP20) family. In terms of assembly, monomer. Forms homomultimers of about 100-150 subunits at optimal growth temperatures. Conformation changes to monomers at high temperatures or high ionic concentrations.

It localises to the cytoplasm. Associates with aggregated proteins, together with IbpB, to stabilize and protect them from irreversible denaturation and extensive proteolysis during heat shock and oxidative stress. Aggregated proteins bound to the IbpAB complex are more efficiently refolded and reactivated by the ATP-dependent chaperone systems ClpB and DnaK/DnaJ/GrpE. Its activity is ATP-independent. In Serratia proteamaculans (strain 568), this protein is Small heat shock protein IbpA.